The chain runs to 440 residues: Serine hydroxymethyltransferase (440 aa).

Residues leucine 119 and 123-125 (GHL) contribute to the (6S)-5,6,7,8-tetrahydrofolate site. Residue lysine 228 is modified to N6-(pyridoxal phosphate)lysine. 370-372 (SPF) lines the (6S)-5,6,7,8-tetrahydrofolate pocket.

The protein belongs to the SHMT family. Homodimer. Pyridoxal 5'-phosphate is required as a cofactor.

Its subcellular location is the cytoplasm. It catalyses the reaction (6R)-5,10-methylene-5,6,7,8-tetrahydrofolate + glycine + H2O = (6S)-5,6,7,8-tetrahydrofolate + L-serine. It functions in the pathway one-carbon metabolism; tetrahydrofolate interconversion. It participates in amino-acid biosynthesis; glycine biosynthesis; glycine from L-serine: step 1/1. Functionally, catalyzes the reversible interconversion of serine and glycine with tetrahydrofolate (THF) serving as the one-carbon carrier. This reaction serves as the major source of one-carbon groups required for the biosynthesis of purines, thymidylate, methionine, and other important biomolecules. Also exhibits THF-independent aldolase activity toward beta-hydroxyamino acids, producing glycine and aldehydes, via a retro-aldol mechanism. In Chlorobaculum parvum (strain DSM 263 / NCIMB 8327) (Chlorobium vibrioforme subsp. thiosulfatophilum), this protein is Serine hydroxymethyltransferase.